The sequence spans 142 residues: Large ribosomal subunit protein uL11 (142 aa).

This sequence belongs to the universal ribosomal protein uL11 family. Part of the ribosomal stalk of the 50S ribosomal subunit. Interacts with L10 and the large rRNA to form the base of the stalk. L10 forms an elongated spine to which L12 dimers bind in a sequential fashion forming a multimeric L10(L12)X complex. In terms of processing, one or more lysine residues are methylated.

Its function is as follows. Forms part of the ribosomal stalk which helps the ribosome interact with GTP-bound translation factors. The polypeptide is Large ribosomal subunit protein uL11 (Sinorhizobium fredii (strain NBRC 101917 / NGR234)).